A 577-amino-acid polypeptide reads, in one-letter code: Arginine--tRNA ligase (577 aa).

A 'HIGH' region motif is present at residues 122 to 132 (PNVAKEMHVGH).

Belongs to the class-I aminoacyl-tRNA synthetase family. Monomer.

Its subcellular location is the cytoplasm. The enzyme catalyses tRNA(Arg) + L-arginine + ATP = L-arginyl-tRNA(Arg) + AMP + diphosphate. The protein is Arginine--tRNA ligase of Escherichia coli O6:K15:H31 (strain 536 / UPEC).